A 498-amino-acid chain; its full sequence is N-succinylglutamate 5-semialdehyde dehydrogenase 1 (498 aa).

Residue G231–G236 participates in NAD(+) binding. Catalysis depends on residues E254 and C288.

The protein belongs to the aldehyde dehydrogenase family. AstD subfamily.

It carries out the reaction N-succinyl-L-glutamate 5-semialdehyde + NAD(+) + H2O = N-succinyl-L-glutamate + NADH + 2 H(+). The protein operates within amino-acid degradation; L-arginine degradation via AST pathway; L-glutamate and succinate from L-arginine: step 4/5. Its function is as follows. Catalyzes the NAD-dependent reduction of succinylglutamate semialdehyde into succinylglutamate. This chain is N-succinylglutamate 5-semialdehyde dehydrogenase 1, found in Shewanella denitrificans (strain OS217 / ATCC BAA-1090 / DSM 15013).